Reading from the N-terminus, the 1873-residue chain is Voltage-dependent L-type calcium channel subunit alpha-1S (1873 aa).

Positions Met-1–Val-23 are disordered. Residues Met-1 to Lys-51 are Cytoplasmic-facing. The I repeat unit spans residues Asn-38–Phe-337. A helical membrane pass occupies residues Pro-52–Val-70. Residues Tyr-71–Gly-85 lie on the Extracellular side of the membrane. Asn-79 carries N-linked (GlcNAc...) asparagine glycosylation. The chain crosses the membrane as a helical span at residues Leu-86–Ile-106. Residues Ala-107–Asp-115 are Cytoplasmic-facing. The helical transmembrane segment at Ala-116–Thr-136 threads the bilayer. Over Ala-137–Asp-160 the chain is Extracellular. A helical membrane pass occupies residues Val-161–Val-179. Residues Pro-180–Leu-196 lie on the Cytoplasmic side of the membrane. The helical transmembrane segment at Phe-197 to Phe-218 threads the bilayer. Topologically, residues Lys-219–Gly-279 are extracellular. 2 disulfides stabilise this stretch: Cys-226-Cys-254 and Cys-245-Cys-261. Asn-257 carries N-linked (GlcNAc...) asparagine glycosylation. An intramembrane region (pore-forming) is located at residues Phe-280 to Val-301. Positions Thr-290–Gly-293 match the Selectivity filter of repeat I motif. Residue Glu-292 participates in Ca(2+) binding. Residues Asn-302–Trp-309 are Extracellular-facing. A helical membrane pass occupies residues Pro-310 to Leu-330. Residues Gly-331 to Arg-432 are Cytoplasmic-facing. The segment at Gln-357–Glu-374 is binding to the beta subunit. Phosphoserine occurs at positions 393 and 397. The stretch at Asn-418 to Leu-664 is one II repeat. A helical membrane pass occupies residues Val-433 to Ser-451. Residues Glu-452–His-462 are Extracellular-facing. Residues Leu-463 to Met-483 traverse the membrane as a helical segment. Topologically, residues Tyr-484–Ser-494 are cytoplasmic. A helical transmembrane segment spans residues Ile-495–Val-514. Over Glu-515–Gly-523 the chain is Extracellular. The helical transmembrane segment at Ile-524–Trp-542 threads the bilayer. At Thr-543–Ser-561 the chain is on the cytoplasmic side. The helical transmembrane segment at Leu-562–Phe-581 threads the bilayer. At Gly-582–Pro-601 the chain is on the extracellular side. The segment at residues Gln-602–Gly-623 is an intramembrane region (pore-forming). Positions Thr-612–Asp-615 match the Selectivity filter of repeat II motif. Glu-614 is a binding site for Ca(2+). The Extracellular portion of the chain corresponds to Ile-624–Pro-633. The chain crosses the membrane as a helical span at residues Gly-634–Leu-653. Residues Asn-654–Thr-799 are Cytoplasmic-facing. Disordered stretches follow at residues Ala-673–Thr-717 and Glu-731–Arg-757. The residue at position 687 (Ser-687) is a Phosphoserine; by PKA. Residues Leu-690–Gly-711 are compositionally biased toward basic and acidic residues. Positions Pro-742–Glu-751 are enriched in acidic residues. The interaction with STAC, STAC2 and STAC3 (via SH3 domains) stretch occupies residues Glu-747–Pro-760. The III repeat unit spans residues Asn-786–Phe-1068. A helical membrane pass occupies residues Trp-800 to Ala-818. Residues Glu-819–Gln-830 are Extracellular-facing. A helical membrane pass occupies residues Ile-831 to Lys-850. Over Met-851–Asn-866 the chain is Cytoplasmic. Residues Tyr-867–Leu-885 form a helical membrane-spanning segment. The Extracellular segment spans residues Glu-886 to Val-892. Residues Val-893–Ala-911 form a helical membrane-spanning segment. Residues Lys-912–Asn-930 are Cytoplasmic-facing. A helical transmembrane segment spans residues Ile-931–Phe-950. Residues Lys-951–Val-1000 lie on the Extracellular side of the membrane. A disulfide bridge connects residues Cys-957 and Cys-968. Residues Arg-988–Lys-1077 are dihydropyridine binding. The pore-forming intramembrane region spans Leu-1001–Tyr-1021. The Selectivity filter of repeat III signature appears at Thr-1012–Gly-1015. Residue Glu-1014 participates in Ca(2+) binding. Residues Arg-1022 to Arg-1038 lie on the Extracellular side of the membrane. Residues Val-1039 to Phe-1060 form a helical membrane-spanning segment. Over Val-1061–Ser-1118 the chain is Cytoplasmic. Residues Asn-1105 to Phe-1384 form an IV repeat. A helical transmembrane segment spans residues Tyr-1119–Tyr-1140. Over His-1141–His-1148 the chain is Extracellular. Residues Ile-1149–Leu-1170 form a helical membrane-spanning segment. Residues Ala-1171–Asp-1180 are Cytoplasmic-facing. Residues Pro-1181–Ser-1200 form a helical membrane-spanning segment. Residues Glu-1201 to Ser-1231 lie on the Extracellular side of the membrane. A helical membrane pass occupies residues Ser-1232–Ala-1250. Topologically, residues Glu-1251–Pro-1268 are cytoplasmic. A helical transmembrane segment spans residues Tyr-1269–Phe-1289. The Extracellular segment spans residues Gly-1290–Gln-1311. Residues Ala-1312 to Leu-1330 constitute an intramembrane region (pore-forming). Residues Thr-1321–Ala-1324 carry the Selectivity filter of repeat IV motif. Residues Ala-1331–Phe-1356 are Extracellular-facing. The interval Leu-1337 to Lys-1403 is dihydropyridine binding. Cysteines 1338 and 1352 form a disulfide. The interval Glu-1349–Trp-1391 is phenylalkylamine binding. The chain crosses the membrane as a helical span at residues Ala-1357 to Met-1381. Topologically, residues Asp-1382–Pro-1873 are cytoplasmic. Residues Lys-1522–Glu-1542 form an interaction with calmodulin region. Ser-1575 is modified (phosphoserine; by PKA and CAMK2). At Thr-1579 the chain carries Phosphothreonine; by CK2. Ser-1617 bears the Phosphoserine; by PKA mark. 2 disordered regions span residues Glu-1689–Pro-1782 and Gly-1841–Pro-1873. The segment covering Gly-1847 to Leu-1858 has biased composition (low complexity).

Belongs to the calcium channel alpha-1 subunit (TC 1.A.1.11) family. CACNA1S subfamily. As to quaternary structure, component of a calcium channel complex consisting of a pore-forming alpha subunit (CACNA1S) and the ancillary subunits CACNB1 or CACNB2, CACNG1 and CACNA2D1. The channel complex contains alpha, beta, gamma and delta subunits in a 1:1:1:1 ratio, i.e. it contains either CACNB1 or CACNB2. CACNA1S channel activity is modulated by the auxiliary subunits (CACNB1 or CACNB2, CACNG1 and CACNA2D1). Interacts with DYSF and JSRP1. Interacts with RYR1. Interacts with STAC, STAC2 and STAC3 (via their SH3 domains). Interaction with STAC3 promotes expression at the cell membrane. Interaction with STAC2 promotes expression at the cell membrane, but with much lower efficiency than STAC3. Interaction with STAC1 leads to very low levels expression at the cell membrane, much less than the levels observed upon interaction with STAC3 and STAC2. Interacts with CALM. In terms of processing, the alpha-1S subunit is found in two isoforms in the skeletal muscle: a minor form of 212 kDa containing the complete amino acid sequence, and a major form of 190 kDa derived from the full-length form by post-translational proteolysis close to Phe-1690. Phosphorylated. Phosphorylation by PKA activates the calcium channel. Both the minor and major forms are phosphorylated in vitro by PKA. Phosphorylation at Ser-1575 is involved in beta-adrenergic-mediated regulation of the channel. As to expression, detected in skeletal muscle T-tubules (at protein level).

It is found in the cell membrane. Its subcellular location is the sarcolemma. The protein resides in the T-tubule. It catalyses the reaction Ca(2+)(in) = Ca(2+)(out). Channel activity is blocked by dihydropyridines (DHP), phenylalkylamines, and by benzothiazepines. Pore-forming, alpha-1S subunit of the voltage-gated calcium channel that gives rise to L-type calcium currents in skeletal muscle. Calcium channels containing the alpha-1S subunit play an important role in excitation-contraction coupling in skeletal muscle via their interaction with RYR1, which triggers Ca(2+) release from the sarcplasmic reticulum and ultimately results in muscle contraction. Long-lasting (L-type) calcium channels belong to the 'high-voltage activated' (HVA) group. The polypeptide is Voltage-dependent L-type calcium channel subunit alpha-1S (CACNA1S) (Oryctolagus cuniculus (Rabbit)).